The sequence spans 313 residues: Ornithine carbamoyltransferase (313 aa).

Carbamoyl phosphate-binding positions include 61 to 64, Q88, R112, and 139 to 142; these read STRT and HPCQ. L-ornithine is bound by residues N170, D228, and 232–233; that span reads SM. Carbamoyl phosphate contacts are provided by residues 268–269 and R296; that span reads CL.

This sequence belongs to the aspartate/ornithine carbamoyltransferase superfamily. OTCase family.

Its subcellular location is the cytoplasm. It catalyses the reaction carbamoyl phosphate + L-ornithine = L-citrulline + phosphate + H(+). Its pathway is amino-acid biosynthesis; L-arginine biosynthesis; L-arginine from L-ornithine and carbamoyl phosphate: step 1/3. Reversibly catalyzes the transfer of the carbamoyl group from carbamoyl phosphate (CP) to the N(epsilon) atom of ornithine (ORN) to produce L-citrulline. This is Ornithine carbamoyltransferase from Bordetella parapertussis (strain 12822 / ATCC BAA-587 / NCTC 13253).